Reading from the N-terminus, the 740-residue chain is Protein SMY2 (740 aa).

2 positions are modified to phosphoserine: Ser-12 and Ser-96. Position 129 is a phosphothreonine (Thr-129). The GYF domain occupies 205 to 261 (ESSWRYIDTQGQIHGPFTTQMMSQWYIGGYFASTLQISRLGSTPETLGINDIFITLG). Residue Thr-311 is modified to Phosphothreonine. 3 disordered regions span residues 346 to 510 (ISQT…KEEL), 523 to 548 (PSNQ…SPLK), and 567 to 592 (QSSS…VTSK). The segment covering 364–439 (EKGKKEKSES…KKSEKTKKDT (76 aa)) has biased composition (basic and acidic residues). Positions 369–440 (EKSESVAKAL…KSEKTKKDTQ (72 aa)) form a coiled coil. The span at 452 to 467 (LPSLNSSSANPAPWAS) shows a compositional bias: low complexity. A compositionally biased stretch (polar residues) spans 474–486 (AIETSIKNGVSST). A compositionally biased stretch (basic and acidic residues) spans 500–510 (NSKEEKQKEEL). A compositionally biased stretch (polar residues) spans 523 to 536 (PSNQTIDIKSQFQK). Ser-545 is modified (phosphoserine). Ser-602 is subject to Phosphoserine.

The protein belongs to the SMY2/mpd2 family. As to quaternary structure, interacts with EAP1 and MSL5 (via the GYP domain).

The protein localises to the cytoplasm. Its function is as follows. Suppressor of the MYO2 gene. This Saccharomyces cerevisiae (strain ATCC 204508 / S288c) (Baker's yeast) protein is Protein SMY2 (SMY2).